The chain runs to 161 residues: Phosphopantetheine adenylyltransferase (161 aa).

Residue threonine 9 coordinates substrate. ATP contacts are provided by residues 9 to 10 (TF) and histidine 17. 3 residues coordinate substrate: lysine 41, leucine 73, and arginine 87. ATP is bound by residues 88–90 (GLR), glutamate 98, and 123–129 (YQFISGT).

It belongs to the bacterial CoaD family. In terms of assembly, homohexamer. Mg(2+) serves as cofactor.

Its subcellular location is the cytoplasm. The catalysed reaction is (R)-4'-phosphopantetheine + ATP + H(+) = 3'-dephospho-CoA + diphosphate. It participates in cofactor biosynthesis; coenzyme A biosynthesis; CoA from (R)-pantothenate: step 4/5. Its function is as follows. Reversibly transfers an adenylyl group from ATP to 4'-phosphopantetheine, yielding dephospho-CoA (dPCoA) and pyrophosphate. In Cupriavidus pinatubonensis (strain JMP 134 / LMG 1197) (Cupriavidus necator (strain JMP 134)), this protein is Phosphopantetheine adenylyltransferase.